Here is a 368-residue protein sequence, read N- to C-terminus: 2-aminoethylphosphonate--pyruvate transaminase (368 aa).

The residue at position 192 (lysine 192) is an N6-(pyridoxal phosphate)lysine.

It belongs to the class-V pyridoxal-phosphate-dependent aminotransferase family. PhnW subfamily. As to quaternary structure, homodimer. The cofactor is pyridoxal 5'-phosphate.

The enzyme catalyses (2-aminoethyl)phosphonate + pyruvate = phosphonoacetaldehyde + L-alanine. In terms of biological role, involved in phosphonate degradation. The sequence is that of 2-aminoethylphosphonate--pyruvate transaminase from Pseudomonas putida (strain GB-1).